The primary structure comprises 182 residues: Large ribosomal subunit protein uL6 (182 aa).

It belongs to the universal ribosomal protein uL6 family. In terms of assembly, part of the 50S ribosomal subunit.

Its function is as follows. This protein binds to the 23S rRNA, and is important in its secondary structure. It is located near the subunit interface in the base of the L7/L12 stalk, and near the tRNA binding site of the peptidyltransferase center. The sequence is that of Large ribosomal subunit protein uL6 from Dehalococcoides mccartyi (strain ATCC BAA-2266 / KCTC 15142 / 195) (Dehalococcoides ethenogenes (strain 195)).